A 290-amino-acid polypeptide reads, in one-letter code: MKRIFLFIATNIAVIAVMSVVLSLLGVDRFISQAGLNLPMLLVFSLVVGFTGSIISLLISKPMAKWSTGARVIDAPSSSTELWLIDTVSKLAQRAGIKMPEVAVYDGEPNAFATGAFRDSALVAVSTGLLQSMTKDEVEAVLAHEVAHVANGDMVTMTLVQGVVNTFVVFLSRVVGYFVDRAISRDNNNSQGIGYTITVIVSQIVFGIAASVIVAWFSRHREFRADAGAAKLLGSPQPMMKALARLGGIEPTSLPEGLASLGINDKPGFAALFSSHPPIEDRIAALRSLQ.

The next 2 helical transmembrane spans lie at 4 to 24 and 39 to 59; these read IFLFIATNIAVIAVMSVVLSL and PMLLVFSLVVGFTGSIISLLI. H144 provides a ligand contact to Zn(2+). E145 is a catalytic residue. Residue H148 coordinates Zn(2+). 2 helical membrane passes run 159 to 179 and 197 to 217; these read LVQGVVNTFVVFLSRVVGYFV and ITVIVSQIVFGIAASVIVAWF. A Zn(2+)-binding site is contributed by E222.

It belongs to the peptidase M48B family. The cofactor is Zn(2+).

It is found in the cell inner membrane. The sequence is that of Protease HtpX homolog from Janthinobacterium sp. (strain Marseille) (Minibacterium massiliensis).